Here is a 268-residue protein sequence, read N- to C-terminus: Phosphatidylglycerol--prolipoprotein diacylglyceryl transferase (268 aa).

Transmembrane regions (helical) follow at residues 14 to 34 (LGPI…FAGW), 57 to 77 (LTFY…IIFY), 90 to 110 (FFLW…LIAF), and 117 to 137 (IGAN…IGLG). R140 provides a ligand contact to a 1,2-diacyl-sn-glycero-3-phospho-(1'-sn-glycerol). Helical transmembrane passes span 174–194 (QLFE…LVTI), 200–220 (YLVL…CEFF), and 238–258 (GQIL…AVFI).

Belongs to the Lgt family.

Its subcellular location is the cell inner membrane. The catalysed reaction is L-cysteinyl-[prolipoprotein] + a 1,2-diacyl-sn-glycero-3-phospho-(1'-sn-glycerol) = an S-1,2-diacyl-sn-glyceryl-L-cysteinyl-[prolipoprotein] + sn-glycerol 1-phosphate + H(+). It participates in protein modification; lipoprotein biosynthesis (diacylglyceryl transfer). Functionally, catalyzes the transfer of the diacylglyceryl group from phosphatidylglycerol to the sulfhydryl group of the N-terminal cysteine of a prolipoprotein, the first step in the formation of mature lipoproteins. This Francisella tularensis subsp. mediasiatica (strain FSC147) protein is Phosphatidylglycerol--prolipoprotein diacylglyceryl transferase.